The sequence spans 140 residues: Small ribosomal subunit protein bS6 (140 aa).

A disordered region spans residues 96–140 (VTGQSEMLKAEENRSERRERRERPENAESNDGDDSDSNDSDNADE). Residues 103 to 121 (LKAEENRSERRERRERPEN) are compositionally biased toward basic and acidic residues. Acidic residues predominate over residues 123-140 (ESNDGDDSDSNDSDNADE).

The protein belongs to the bacterial ribosomal protein bS6 family.

In terms of biological role, binds together with bS18 to 16S ribosomal RNA. The chain is Small ribosomal subunit protein bS6 from Ectopseudomonas mendocina (strain ymp) (Pseudomonas mendocina).